We begin with the raw amino-acid sequence, 29 residues long: Kappa-sparatoxin-Hv1e (29 aa).

Intrachain disulfides connect cysteine 3–cysteine 17, cysteine 10–cysteine 22, and cysteine 16–cysteine 26.

As to expression, expressed by the venom gland.

Its subcellular location is the secreted. Its function is as follows. Inhibitor of voltage-gated potassium channels of the Kv4/KCND family. Blocks calcium channels (Cav). The protein is Kappa-sparatoxin-Hv1e of Heteropoda venatoria (Brown huntsman spider).